The following is a 104-amino-acid chain: L-rhamnose mutarotase (104 aa).

Tyr-18 contacts substrate. The Proton donor role is filled by His-22. Residues Tyr-41 and 76–77 contribute to the substrate site; that span reads WW.

Belongs to the rhamnose mutarotase family. As to quaternary structure, homodimer.

It localises to the cytoplasm. It catalyses the reaction alpha-L-rhamnose = beta-L-rhamnose. It participates in carbohydrate metabolism; L-rhamnose metabolism. Functionally, involved in the anomeric conversion of L-rhamnose. This chain is L-rhamnose mutarotase, found in Lachnoclostridium phytofermentans (strain ATCC 700394 / DSM 18823 / ISDg) (Clostridium phytofermentans).